The chain runs to 371 residues: Queuine tRNA-ribosyltransferase (371 aa).

The active-site Proton acceptor is the D89. Residues 89 to 93 (DSGGF), D143, Q185, and G212 each bind substrate. An RNA binding region spans residues 243-249 (GVGTPED). Residue D262 is the Nucleophile of the active site. The RNA binding; important for wobble base 34 recognition stretch occupies residues 267 to 271 (TRNAR). Zn(2+) contacts are provided by C300, C302, C305, and H331.

Belongs to the queuine tRNA-ribosyltransferase family. Homodimer. Within each dimer, one monomer is responsible for RNA recognition and catalysis, while the other monomer binds to the replacement base PreQ1. Zn(2+) is required as a cofactor.

The enzyme catalyses 7-aminomethyl-7-carbaguanine + guanosine(34) in tRNA = 7-aminomethyl-7-carbaguanosine(34) in tRNA + guanine. Its pathway is tRNA modification; tRNA-queuosine biosynthesis. In terms of biological role, catalyzes the base-exchange of a guanine (G) residue with the queuine precursor 7-aminomethyl-7-deazaguanine (PreQ1) at position 34 (anticodon wobble position) in tRNAs with GU(N) anticodons (tRNA-Asp, -Asn, -His and -Tyr). Catalysis occurs through a double-displacement mechanism. The nucleophile active site attacks the C1' of nucleotide 34 to detach the guanine base from the RNA, forming a covalent enzyme-RNA intermediate. The proton acceptor active site deprotonates the incoming PreQ1, allowing a nucleophilic attack on the C1' of the ribose to form the product. After dissociation, two additional enzymatic reactions on the tRNA convert PreQ1 to queuine (Q), resulting in the hypermodified nucleoside queuosine (7-(((4,5-cis-dihydroxy-2-cyclopenten-1-yl)amino)methyl)-7-deazaguanosine). This chain is Queuine tRNA-ribosyltransferase, found in Nitrosomonas europaea (strain ATCC 19718 / CIP 103999 / KCTC 2705 / NBRC 14298).